Here is a 439-residue protein sequence, read N- to C-terminus: Xylose isomerase (439 aa).

Active-site residues include histidine 101 and aspartate 104. Mg(2+)-binding residues include glutamate 232, glutamate 268, histidine 271, aspartate 296, aspartate 307, aspartate 309, and aspartate 339.

This sequence belongs to the xylose isomerase family. As to quaternary structure, homotetramer. The cofactor is Mg(2+).

It localises to the cytoplasm. The catalysed reaction is alpha-D-xylose = alpha-D-xylulofuranose. In Thermoanaerobacterium saccharolyticum, this protein is Xylose isomerase (xylA).